A 554-amino-acid polypeptide reads, in one-letter code: CTP synthase (554 aa).

The tract at residues 1–279 (MSQPRAEHVT…DAFLIRRLDL (279 aa)) is amidoligase domain. Ser-21 lines the CTP pocket. Ser-21 serves as a coordination point for UTP. Residues 22-27 (SLGKGL) and Asp-79 contribute to the ATP site. 2 residues coordinate Mg(2+): Asp-79 and Glu-153. Residues 160–162 (DIE), 200–205 (KTKPTQ), and Lys-236 contribute to the CTP site. UTP-binding positions include 200–205 (KTKPTQ) and Lys-236. Residues 304 to 551 (TVALVGKYID…VKAGLKHKND (248 aa)) form the Glutamine amidotransferase type-1 domain. Residue Gly-367 participates in L-glutamine binding. The Nucleophile; for glutamine hydrolysis role is filled by Cys-394. L-glutamine-binding positions include 395–398 (LGLQ), Glu-417, and Arg-478. Catalysis depends on residues His-524 and Glu-526.

This sequence belongs to the CTP synthase family. Homotetramer.

The catalysed reaction is UTP + L-glutamine + ATP + H2O = CTP + L-glutamate + ADP + phosphate + 2 H(+). It carries out the reaction L-glutamine + H2O = L-glutamate + NH4(+). It catalyses the reaction UTP + NH4(+) + ATP = CTP + ADP + phosphate + 2 H(+). It participates in pyrimidine metabolism; CTP biosynthesis via de novo pathway; CTP from UDP: step 2/2. With respect to regulation, allosterically activated by GTP, when glutamine is the substrate; GTP has no effect on the reaction when ammonia is the substrate. The allosteric effector GTP functions by stabilizing the protein conformation that binds the tetrahedral intermediate(s) formed during glutamine hydrolysis. Inhibited by the product CTP, via allosteric rather than competitive inhibition. Catalyzes the ATP-dependent amination of UTP to CTP with either L-glutamine or ammonia as the source of nitrogen. Regulates intracellular CTP levels through interactions with the four ribonucleotide triphosphates. This is CTP synthase from Corynebacterium kroppenstedtii (strain DSM 44385 / JCM 11950 / CIP 105744 / CCUG 35717).